Reading from the N-terminus, the 405-residue chain is Succinyl-CoA--L-malate CoA-transferase beta subunit (405 aa).

The Nucleophile role is filled by aspartate 175.

Belongs to the CoA-transferase III family. As to quaternary structure, forms a large complex composed of six heterodimers (alpha, beta).

The catalysed reaction is succinyl-CoA + (S)-malate = (S)-malyl-CoA + succinate. The enzyme catalyses (3S)-citramalate + succinyl-CoA = (3S)-citramalyl-CoA + succinate. Involved in the 3-hydroxypropionate cycle used for autotrophic carbon dioxide fixation. Catalyzes the transfer of CoA moiety from succinyl-CoA to L-malate to yield L-malyl-CoA. In Chloroflexus aurantiacus (strain ATCC 29366 / DSM 635 / J-10-fl), this protein is Succinyl-CoA--L-malate CoA-transferase beta subunit (smtB).